A 160-amino-acid polypeptide reads, in one-letter code: Eukaryotic translation initiation factor 5A (160 aa).

The segment covering 1–13 has biased composition (basic and acidic residues); the sequence is MSDSEEHHFESKA. Residues 1–22 form a disordered region; it reads MSDSEEHHFESKADAGASKTYP. Residue Lys53 is modified to Hypusine.

It belongs to the eIF-5A family. Post-translationally, lys-53 undergoes hypusination, a unique post-translational modification that consists in the addition of a butylamino group from spermidine to lysine side chain, leading to the formation of the unusual amino acid hypusine. eIF-5As are the only known proteins to undergo this modification, which is essential for their function.

Its function is as follows. Translation factor that promotes translation elongation and termination, particularly upon ribosome stalling at specific amino acid sequence contexts. Binds between the exit (E) and peptidyl (P) site of the ribosome and promotes rescue of stalled ribosome: specifically required for efficient translation of polyproline-containing peptides as well as other motifs that stall the ribosome. Acts as a ribosome quality control (RQC) cofactor by joining the RQC complex to facilitate peptidyl transfer during CAT tailing step. This is Eukaryotic translation initiation factor 5A (TIF5A) from Zea mays (Maize).